The following is a 149-amino-acid chain: D-aminoacyl-tRNA deacylase (149 aa).

A Gly-cisPro motif, important for rejection of L-amino acids motif is present at residues 137–138; it reads GP.

Belongs to the DTD family. Homodimer.

It is found in the cytoplasm. The enzyme catalyses glycyl-tRNA(Ala) + H2O = tRNA(Ala) + glycine + H(+). It carries out the reaction a D-aminoacyl-tRNA + H2O = a tRNA + a D-alpha-amino acid + H(+). An aminoacyl-tRNA editing enzyme that deacylates mischarged D-aminoacyl-tRNAs. Also deacylates mischarged glycyl-tRNA(Ala), protecting cells against glycine mischarging by AlaRS. Acts via tRNA-based rather than protein-based catalysis; rejects L-amino acids rather than detecting D-amino acids in the active site. By recycling D-aminoacyl-tRNA to D-amino acids and free tRNA molecules, this enzyme counteracts the toxicity associated with the formation of D-aminoacyl-tRNA entities in vivo and helps enforce protein L-homochirality. This is D-aminoacyl-tRNA deacylase from Desulforamulus reducens (strain ATCC BAA-1160 / DSM 100696 / MI-1) (Desulfotomaculum reducens).